The chain runs to 1254 residues: Ubiquitin carboxyl-terminal hydrolase 12 (1254 aa).

Ser84 carries the phosphoserine modification. In terms of domain architecture, DUSP spans 97–199 (NVLEQQRDVV…GSYPVVTNLV (103 aa)). Residues 364-1110 (TGLVNLGNTC…SAYLLFYIRR (747 aa)) enclose the USP domain. Residue Cys373 is the Nucleophile of the active site. Positions 827 to 893 (DEGDTEGSEA…EPELTDKPEA (67 aa)) are disordered. Residues 854-864 (TVTNNENVNNT) show a composition bias toward low complexity. Over residues 867–883 (RDEDMELTDDVEEDAST) the composition is skewed to acidic residues. The active-site Proton acceptor is the His1068. Phosphoserine is present on Ser1160. Positions 1188 to 1207 (QDCNDEDDNDDGERTNSGRR) are disordered. A compositionally biased stretch (acidic residues) spans 1189-1198 (DCNDEDDNDD).

This sequence belongs to the peptidase C19 family. Interacts with FZO1.

The enzyme catalyses Thiol-dependent hydrolysis of ester, thioester, amide, peptide and isopeptide bonds formed by the C-terminal Gly of ubiquitin (a 76-residue protein attached to proteins as an intracellular targeting signal).. Ubiquitin carboxyl-terminal hydrolase that recognizes ubiquitin chains that stabilize FZO1 and promote mitochondrial fusion. UBP12 deubiquitylates FZO1 only after oligomerization. The chain is Ubiquitin carboxyl-terminal hydrolase 12 (UBP12) from Saccharomyces cerevisiae (strain ATCC 204508 / S288c) (Baker's yeast).